The sequence spans 83 residues: Small ribosomal subunit protein bS16 (83 aa).

This sequence belongs to the bacterial ribosomal protein bS16 family.

The protein is Small ribosomal subunit protein bS16 of Magnetococcus marinus (strain ATCC BAA-1437 / JCM 17883 / MC-1).